A 204-amino-acid polypeptide reads, in one-letter code: Threonylcarbamoyl-AMP synthase (204 aa).

Residues 10–204 (ADELDLVANY…KDLLAGHILR (195 aa)) enclose the YrdC-like domain.

It belongs to the SUA5 family. TsaC subfamily.

The protein resides in the cytoplasm. The catalysed reaction is L-threonine + hydrogencarbonate + ATP = L-threonylcarbamoyladenylate + diphosphate + H2O. Its function is as follows. Required for the formation of a threonylcarbamoyl group on adenosine at position 37 (t(6)A37) in tRNAs that read codons beginning with adenine. Catalyzes the conversion of L-threonine, HCO(3)(-)/CO(2) and ATP to give threonylcarbamoyl-AMP (TC-AMP) as the acyladenylate intermediate, with the release of diphosphate. In Moraxella catarrhalis (strain BBH18), this protein is Threonylcarbamoyl-AMP synthase.